We begin with the raw amino-acid sequence, 376 residues long: Phytanoyl-CoA hydroxylase-interacting protein-like (376 aa).

In terms of domain architecture, Fibronectin type-III spans Val-52 to Tyr-161.

This sequence belongs to the PHYHIP family.

In terms of biological role, may play a role in the development of the central system. This is Phytanoyl-CoA hydroxylase-interacting protein-like (phyhipl) from Xenopus tropicalis (Western clawed frog).